The sequence spans 83 residues: Cytochrome b559 subunit alpha (83 aa).

Residues 21 to 35 (VIHSITIPSLFIAGW) traverse the membrane as a helical segment. His-23 is a binding site for heme.

The protein belongs to the PsbE/PsbF family. Heterodimer of an alpha subunit and a beta subunit. PSII is composed of 1 copy each of membrane proteins PsbA, PsbB, PsbC, PsbD, PsbE, PsbF, PsbH, PsbI, PsbJ, PsbK, PsbL, PsbM, PsbT, PsbX, PsbY, PsbZ, Psb30/Ycf12, at least 3 peripheral proteins of the oxygen-evolving complex and a large number of cofactors. It forms dimeric complexes. Heme b is required as a cofactor.

The protein resides in the plastid. The protein localises to the chloroplast thylakoid membrane. Its function is as follows. This b-type cytochrome is tightly associated with the reaction center of photosystem II (PSII). PSII is a light-driven water:plastoquinone oxidoreductase that uses light energy to abstract electrons from H(2)O, generating O(2) and a proton gradient subsequently used for ATP formation. It consists of a core antenna complex that captures photons, and an electron transfer chain that converts photonic excitation into a charge separation. The chain is Cytochrome b559 subunit alpha from Chaetosphaeridium globosum (Charophycean green alga).